A 358-amino-acid chain; its full sequence is Beta-lactamase (358 aa).

Ser-60 functions as the Acyl-ester intermediate in the catalytic mechanism. Tyr-146 (proton acceptor) is an active-site residue. 311–313 (KTG) serves as a coordination point for substrate.

This sequence belongs to the class-C beta-lactamase family.

It is found in the periplasm. It carries out the reaction a beta-lactam + H2O = a substituted beta-amino acid. In terms of biological role, this protein is a serine beta-lactamase with a substrate specificity for cephalosporins. This is Beta-lactamase from Pseudomonas fluorescens.